The sequence spans 304 residues: uncharacterized protein (304 aa).

The first 25 residues, 1-25 (MVKTAMLGAVALVIALGGTCGVADA), serve as a signal peptide directing secretion. The 270-residue stretch at 34 to 303 (PMIVAHRAGT…DSPLAAQQWR (270 aa)) folds into the GP-PDE domain.

This is an uncharacterized protein from Mycobacterium tuberculosis (strain CDC 1551 / Oshkosh).